The sequence spans 353 residues: D-alanine--D-alanine ligase (353 aa).

The ATP-grasp domain occupies 135 to 344 (KMVFAQAGLA…FPQLVDRLVQ (210 aa)). 171 to 226 (EAQLDYPMFVKPANLGSSVGISKVRTRDELEKALDLAAEYDRRLIVEAGVTAREVE) serves as a coordination point for ATP. Asp297, Glu311, and Asn313 together coordinate Mg(2+).

Belongs to the D-alanine--D-alanine ligase family. Mg(2+) serves as cofactor. The cofactor is Mn(2+).

It localises to the cytoplasm. It carries out the reaction 2 D-alanine + ATP = D-alanyl-D-alanine + ADP + phosphate + H(+). It participates in cell wall biogenesis; peptidoglycan biosynthesis. Functionally, cell wall formation. This chain is D-alanine--D-alanine ligase, found in Picosynechococcus sp. (strain ATCC 27264 / PCC 7002 / PR-6) (Agmenellum quadruplicatum).